We begin with the raw amino-acid sequence, 547 residues long: Glucose-6-phosphate isomerase (547 aa).

Glu351 functions as the Proton donor in the catalytic mechanism. Residues His382 and Lys510 contribute to the active site.

The protein belongs to the GPI family.

It localises to the cytoplasm. The enzyme catalyses alpha-D-glucose 6-phosphate = beta-D-fructose 6-phosphate. It participates in carbohydrate biosynthesis; gluconeogenesis. It functions in the pathway carbohydrate degradation; glycolysis; D-glyceraldehyde 3-phosphate and glycerone phosphate from D-glucose: step 2/4. In terms of biological role, catalyzes the reversible isomerization of glucose-6-phosphate to fructose-6-phosphate. The protein is Glucose-6-phosphate isomerase of Beijerinckia indica subsp. indica (strain ATCC 9039 / DSM 1715 / NCIMB 8712).